The following is a 702-amino-acid chain: Phosphatase and actin regulator 4 (702 aa).

Disordered regions lie at residues 1 to 38, 82 to 194, and 222 to 363; these read MEDP…SKFS, GVLL…SSGG, and NLSV…PFPA. The stretch at 63 to 88 is one RPEL 1 repeat; the sequence is EVLERKISMRKPREELVKRGVLLEDP. Over residues 106–120 the composition is skewed to polar residues; that stretch reads GHTTPIGNARSSSPV. 4 positions are modified to phosphoserine: Ser-116, Ser-118, Ser-131, and Ser-147. Over residues 147–156 the composition is skewed to polar residues; that stretch reads STGSQPNSEA. The span at 163 to 173 shows a compositional bias: pro residues; sequence VPKPPLLPPKR. The segment covering 233-250 has biased composition (low complexity); it reads TLPAAPASTNTTATPSLT. Residues Ser-270 and Ser-291 each carry the phosphoserine modification. The segment covering 301-318 has biased composition (polar residues); sequence PSTSVPTLESAAAITTKT. A phosphoserine mark is found at Ser-342 and Ser-344. Residues 342–362 show a composition bias toward pro residues; that stretch reads SPSPPLPTHIPPEPPRTPPFP. At Thr-358 the chain carries Phosphothreonine. Ser-427 carries the post-translational modification Phosphoserine. Residue Thr-432 is modified to Phosphothreonine. 3 positions are modified to phosphoserine: Ser-443, Ser-453, and Ser-464. The disordered stretch occupies residues 473–536; that stretch reads KVPDDEEEEE…EEDEDESYQS (64 aa). The span at 486-497 shows a compositional bias: low complexity; it reads PSTFSEETTPTS. A compositionally biased stretch (acidic residues) spans 508–518; that stretch reads EEEEKESDSDS. A phosphoserine mark is found at Ser-514, Ser-516, Ser-557, and Ser-590. RPEL repeat units lie at residues 583–608 and 621–646; these read NTLI…QPKN and RRLT…RFNE. Residues 592–615 are disordered; that stretch reads RPTPEELEQRNILQPKNEADRQAE. Phosphoserine is present on Ser-628.

The protein belongs to the phosphatase and actin regulator family. As to quaternary structure, binds PPP1CA and actin.

The protein resides in the cytoplasm. The protein localises to the cell projection. It localises to the lamellipodium. Functionally, regulator of protein phosphatase 1 (PP1) required for neural tube and optic fissure closure, and enteric neural crest cell (ENCCs) migration during development. Acts as an activator of PP1 by interacting with PPP1CA and preventing phosphorylation of PPP1CA at 'Thr-320'. During neural tube closure, localizes to the ventral neural tube and activates PP1, leading to down-regulate cell proliferation within cranial neural tissue and the neural retina. Also acts as a regulator of migration of enteric neural crest cells (ENCCs) by activating PP1, leading to dephosphorylation and subsequent activation of cofilin (COF1 or COF2) and repression of the integrin signaling through the RHO/ROCK pathway. This is Phosphatase and actin regulator 4 (PHACTR4) from Pongo abelii (Sumatran orangutan).